A 173-amino-acid polypeptide reads, in one-letter code: Adenine phosphoribosyltransferase (173 aa).

It belongs to the purine/pyrimidine phosphoribosyltransferase family. Homodimer.

The protein resides in the cytoplasm. It catalyses the reaction AMP + diphosphate = 5-phospho-alpha-D-ribose 1-diphosphate + adenine. The protein operates within purine metabolism; AMP biosynthesis via salvage pathway; AMP from adenine: step 1/1. Catalyzes a salvage reaction resulting in the formation of AMP, that is energically less costly than de novo synthesis. This chain is Adenine phosphoribosyltransferase, found in Listeria monocytogenes serovar 1/2a (strain ATCC BAA-679 / EGD-e).